We begin with the raw amino-acid sequence, 60 residues long: MAKHPVPKKKTSKARRDARRSHHALTPPILVPCPECKAMKPPHTVCPECGYYAGRKVLEV.

Basic residues predominate over residues Met-1–His-23. Positions Met-1 to Pro-28 are disordered.

This sequence belongs to the bacterial ribosomal protein bL32 family. Part of the 50S ribosomal subunit.

Its function is as follows. Found on the solvent side of the large subunit. The protein is Large ribosomal subunit protein bL32 (rpmF) of Thermus thermophilus (strain ATCC BAA-163 / DSM 7039 / HB27).